A 282-amino-acid chain; its full sequence is Cell cycle checkpoint protein RAD1 (282 aa).

The protein belongs to the rad1 family. In terms of assembly, component of the toroidal 9-1-1 (RAD9-RAD1-HUS1) complex, composed of RAD9A, RAD1 and HUS1. The 9-1-1 complex associates with LIG1, POLB, FEN1, RAD17, HDAC1, RPA1 and RPA2. The 9-1-1 complex associates with the RAD17-RFC complex. RAD1 interacts with POLB, FEN1, HUS1, HUS1B, RAD9A and RAD9B. Interacts with DNAJC7. Interacts with RHNO1; interaction is direct. As to expression, expressed in testis, uterus, bladder, spleen, ovaries, lung, brain and muscle (at protein level).

It is found in the nucleus. In terms of biological role, component of the 9-1-1 cell-cycle checkpoint response complex that plays a major role in DNA repair. The 9-1-1 complex is recruited to DNA lesion upon damage by the RAD17-replication factor C (RFC) clamp loader complex. Acts then as a sliding clamp platform on DNA for several proteins involved in long-patch base excision repair (LP-BER). The 9-1-1 complex stimulates DNA polymerase beta (POLB) activity by increasing its affinity for the 3'-OH end of the primer-template and stabilizes POLB to those sites where LP-BER proceeds; endonuclease FEN1 cleavage activity on substrates with double, nick, or gap flaps of distinct sequences and lengths; and DNA ligase I (LIG1) on long-patch base excision repair substrates. The 9-1-1 complex is necessary for the recruitment of RHNO1 to sites of double-stranded breaks (DSB) occurring during the S phase. This is Cell cycle checkpoint protein RAD1 (RAD1) from Homo sapiens (Human).